The primary structure comprises 499 residues: BTB/POZ domain-containing protein 16 (499 aa).

Residues 143–199 (INDPLVTREAFATALKNLYMQEVKICLDDVLGVLAAAHILQFGSLFQRCVTVMMSGL) form the BTB domain.

The protein is BTB/POZ domain-containing protein 16 (BTBD16) of Bos taurus (Bovine).